The primary structure comprises 336 residues: 3-hydroxyisobutyrate dehydrogenase, mitochondrial (336 aa).

Residues Met1–Val36 constitute a mitochondrion transit peptide. Thr40–Tyr68 lines the NAD(+) pocket. N6-acetyllysine; alternate occurs at positions 60 and 76. Lys60 and Lys76 each carry N6-succinyllysine; alternate. Lys95 is subject to N6-succinyllysine. Residues Leu103–Pro104 and Asn108 each bind NAD(+). An N6-acetyllysine modification is found at Lys121. Thr134 is an NAD(+) binding site. Lys141 is subject to N6-succinyllysine. Lys145 carries the N6-acetyllysine modification. N6-acetyllysine; alternate is present on Lys149. N6-succinyllysine; alternate is present on Lys149. The active site involves Lys209. 2 positions are modified to N6-acetyllysine; alternate: Lys238 and Lys242. 2 positions are modified to N6-succinyllysine; alternate: Lys238 and Lys242. Position 284 (Lys284) interacts with NAD(+). Position 297 is an N6-succinyllysine (Lys297). N6-acetyllysine; alternate is present on Lys321. Lys321 carries the N6-succinyllysine; alternate modification.

It belongs to the HIBADH-related family. 3-hydroxyisobutyrate dehydrogenase subfamily. As to quaternary structure, homodimer. In terms of tissue distribution, detected in skin fibroblasts.

The protein localises to the mitochondrion. It catalyses the reaction 3-hydroxy-2-methylpropanoate + NAD(+) = 2-methyl-3-oxopropanoate + NADH + H(+). The protein operates within amino-acid degradation; L-valine degradation. The sequence is that of 3-hydroxyisobutyrate dehydrogenase, mitochondrial (HIBADH) from Homo sapiens (Human).